A 219-amino-acid polypeptide reads, in one-letter code: Thiopurine S-methyltransferase (219 aa).

4 residues coordinate S-adenosyl-L-methionine: W10, L45, E66, and R130.

This sequence belongs to the class I-like SAM-binding methyltransferase superfamily. TPMT family.

Its subcellular location is the cytoplasm. The catalysed reaction is S-adenosyl-L-methionine + a thiopurine = S-adenosyl-L-homocysteine + a thiopurine S-methylether.. In Psychrobacter cryohalolentis (strain ATCC BAA-1226 / DSM 17306 / VKM B-2378 / K5), this protein is Thiopurine S-methyltransferase.